The chain runs to 365 residues: Pectate trisaccharide-lyase (365 aa).

The N-terminal stretch at 1 to 25 (MRFSRVVSLVLLLVFTAVLTGAVKA) is a signal peptide. Residues aspartate 142, aspartate 164, and aspartate 168 each contribute to the Ca(2+) site. The PbH1 1 repeat unit spans residues 149 to 171 (SHHIWIDHCTFVNGNDGAVDIKK). Arginine 222 is a catalytic residue. The stretch at 261–287 (GAKVHVEGNYFMGYGAVMAEAGIAFLP) is one PbH1 2 repeat.

Belongs to the polysaccharide lyase 1 family. As to quaternary structure, homotetramer. Ca(2+) is required as a cofactor.

The protein resides in the secreted. The enzyme catalyses eliminative cleavage of unsaturated trigalacturonate as the major product from the reducing end of polygalacturonic acid/pectate.. In terms of biological role, cleaves unsaturated trigalacturonate from pectin. Activity is highest towards polygalacturonic acid, activity on methylated pectins decreases with an increasing degree of methylation. This chain is Pectate trisaccharide-lyase, found in Thermotoga sp. (strain RQ2).